The primary structure comprises 199 residues: Ribosome maturation factor RimP (199 aa).

Residues 165–199 (AGNLPPQPEDDEDMLADFEIDESEDEEDPETGDVQ) form a disordered region. The segment covering 172–199 (PEDDEDMLADFEIDESEDEEDPETGDVQ) has biased composition (acidic residues).

It belongs to the RimP family.

Its subcellular location is the cytoplasm. Functionally, required for maturation of 30S ribosomal subunits. This chain is Ribosome maturation factor RimP, found in Hyphomonas neptunium (strain ATCC 15444).